The sequence spans 252 residues: Protein HEAT-INDUCED TAS1 TARGET 2 (252 aa).

The protein belongs to the heat induced plant HTT protein family. As to expression, expressed ubiquitously, including in seedlings, leaves, stems, inflorescences and siliques.

It is found in the cytoplasm. The protein resides in the nucleus. Functionally, mediates both basal and acquired thermotolerance via HSFA1s-directed pathways (e.g. HSFA1A, HSFA1B, and HSFA1D). Triggers the expression of HSFA1A and HSFA1B. The chain is Protein HEAT-INDUCED TAS1 TARGET 2 from Arabidopsis thaliana (Mouse-ear cress).